Reading from the N-terminus, the 1077-residue chain is Adenylate cyclase type 4 (1077 aa).

Over 1–28 the chain is Cytoplasmic; sequence MARLFSPRPPPSEDLFYETYYSLSQQYP. 6 consecutive transmembrane segments (helical) span residues 29–50, 61–80, 94–117, 120–138, 141–162, and 170–190; these read LLLL…VAWA, FLTT…GLAS, GLVW…VSAW, VSYF…PLGM, AAVA…YLGP, and LLPQ…AGVY. Topologically, residues 191 to 585 are cytoplasmic; the sequence is HKALMERALR…YRLSAIPAFK (395 aa). Mg(2+) is bound by residues Asp278, Ile279, and Asp322. ATP contacts are provided by residues 278–283, 320–322, and Arg366; these read DIVGFT and LGD. At Ser520 the chain carries Phosphoserine. Phosphothreonine is present on Thr536. Transmembrane regions (helical) follow at residues 586-607, 611-633, and 664-687; these read YYEA…LVTN, ALAI…CFSE, and IALG…FFPT. Over 688-714 the chain is Extracellular; it reads SSDCPFQAPNVSSMISNLSWELPGSLP. 2 N-linked (GlcNAc...) asparagine glycosylation sites follow: Asn697 and Asn704. 3 helical membrane passes run 715–736, 744–764, and 791–807; these read LISV…SLFL, LLLL…SHAW, and MGAI…LVLA. Topologically, residues 808–1077 are cytoplasmic; that stretch reads RQNEYYCRLD…RTGPPSATLG (270 aa). Residues Lys925, 1005-1007, 1012-1016, and Lys1052 each bind ATP; these read DIW and NVASR.

The protein belongs to the adenylyl cyclase class-4/guanylyl cyclase family. The cofactor is Mg(2+). It depends on Mn(2+) as a cofactor. In terms of tissue distribution, detected in the zona glomerulosa and the zona fasciculata in the adrenal gland (at protein level).

Its subcellular location is the cell membrane. The protein resides in the cytoplasm. The catalysed reaction is ATP = 3',5'-cyclic AMP + diphosphate. Its activity is regulated as follows. Activated by forskolin. Insensitive to calcium/calmodulin. Stimulated by GNAS and by the G-protein beta and gamma subunit complex. Its function is as follows. Catalyzes the formation of the signaling molecule cAMP in response to G-protein signaling. The chain is Adenylate cyclase type 4 (ADCY4) from Homo sapiens (Human).